A 768-amino-acid polypeptide reads, in one-letter code: Actin filament-associated protein 1-like 1 (768 aa).

Positions 82–145 are disordered; the sequence is DLRDMPEDDG…GKSPEYISSH (64 aa). Phosphoserine occurs at positions 94, 98, 104, and 153. A disordered region spans residues 173 to 211; that stretch reads GELKSSYNDSDAMSSSYESYDEEEEEGKSPQPRHQWPSE. Over residues 177–190 the composition is skewed to low complexity; sequence SSYNDSDAMSSSYE. A PH 1 domain is found at 220–316; the sequence is ECRICAFLLR…WLKVIREVSK (97 aa). Phosphoserine is present on residues serine 329 and serine 343. Positions 418–512 constitute a PH 2 domain; sequence EVPCCGYLNV…WLGLLLVEMG (95 aa). Phosphotyrosine is present on tyrosine 557. Positions 566–604 are disordered; it reads QDEEPERPTGAQVKRHASSCSEKSHRVDPQVKVKRHASS. A compositionally biased stretch (basic and acidic residues) spans 587-596; the sequence is EKSHRVDPQV. Residues 611-700 adopt a coiled-coil conformation; it reads GKNRAEEDAR…VAVKERLQQS (90 aa). Residues 705 to 768 are disordered; the sequence is PALGLSVSSK…KAKEWEMKKT (64 aa). The span at 710–729 shows a compositional bias: polar residues; the sequence is SVSSKPKSGETANKPQNSVP. Serine 747 is modified (phosphoserine). Over residues 759 to 768 the composition is skewed to basic and acidic residues; it reads KAKEWEMKKT.

In terms of assembly, interacts with CTTN. In terms of tissue distribution, expressed in breast, colon and brain. In all 3 tissues, expressed in the microvasculature (at protein level). In addition, in the breast, found in the contractile myoepithelial cell layer which surrounds the breast ducts (at protein level). In the colon, expressed in the mucous membrane and colonic crypts and in the smooth muscle cell layer which provide movement of the colon (at protein level). In the cerebellum, localized around the Purkinje neurons and the granule cells of the granular layer, but not inside cell bodies (at protein level). Outside of the cerebellar cortex, expressed in glial cells (at protein level). Highly expressed away from the cell bodies within the dentate nucleus (at protein level).

Its subcellular location is the cytoplasm. The protein localises to the cell projection. It localises to the podosome. It is found in the invadopodium. The protein resides in the cytoskeleton. Its subcellular location is the stress fiber. In terms of biological role, may be involved in podosome and invadosome formation. The polypeptide is Actin filament-associated protein 1-like 1 (AFAP1L1) (Homo sapiens (Human)).